The primary structure comprises 100 residues: Omega-hexatoxin-Asp2a (100 aa).

The first 23 residues, 1-23 (MKFSKLSITLAVILTQAVFVLCG), serve as a signal peptide directing secretion. Positions 24-55 (MKNEDFMEKGLESNELHDAIKKPVNSGKPDTE) are excised as a propeptide. 3 cysteine pairs are disulfide-bonded: cysteine 60/cysteine 73, cysteine 66/cysteine 79, and cysteine 72/cysteine 84.

Belongs to the neurotoxin 15 family. 02 (omega-actx) subfamily. In terms of tissue distribution, expressed by the venom gland.

The protein localises to the secreted. Potent inhibitor of insect, but not mammalian, voltage-gated calcium channels (Cav). In Atrax sp. (strain Illawarra) (Funnel-web spider), this protein is Omega-hexatoxin-Asp2a.